A 274-amino-acid polypeptide reads, in one-letter code: 2,3,4,5-tetrahydropyridine-2,6-dicarboxylate N-succinyltransferase (274 aa).

Residues R104 and D141 each contribute to the substrate site.

The protein belongs to the transferase hexapeptide repeat family. Homotrimer.

The protein resides in the cytoplasm. The enzyme catalyses (S)-2,3,4,5-tetrahydrodipicolinate + succinyl-CoA + H2O = (S)-2-succinylamino-6-oxoheptanedioate + CoA. It participates in amino-acid biosynthesis; L-lysine biosynthesis via DAP pathway; LL-2,6-diaminopimelate from (S)-tetrahydrodipicolinate (succinylase route): step 1/3. This Buchnera aphidicola subsp. Baizongia pistaciae (strain Bp) protein is 2,3,4,5-tetrahydropyridine-2,6-dicarboxylate N-succinyltransferase.